The chain runs to 341 residues: tRNA N6-adenosine threonylcarbamoyltransferase (341 aa).

2 residues coordinate Fe cation: H114 and H118. Residues 136 to 140 (LVSGG), D170, G183, D187, and N275 each bind substrate. D303 serves as a coordination point for Fe cation.

It belongs to the KAE1 / TsaD family. Requires Fe(2+) as cofactor.

The protein localises to the cytoplasm. It carries out the reaction L-threonylcarbamoyladenylate + adenosine(37) in tRNA = N(6)-L-threonylcarbamoyladenosine(37) in tRNA + AMP + H(+). In terms of biological role, required for the formation of a threonylcarbamoyl group on adenosine at position 37 (t(6)A37) in tRNAs that read codons beginning with adenine. Is involved in the transfer of the threonylcarbamoyl moiety of threonylcarbamoyl-AMP (TC-AMP) to the N6 group of A37, together with TsaE and TsaB. TsaD likely plays a direct catalytic role in this reaction. The sequence is that of tRNA N6-adenosine threonylcarbamoyltransferase from Mycobacterium avium (strain 104).